The sequence spans 92 residues: Transcriptional regulator WhiB1 (92 aa).

Positions 12–74 constitute a 4Fe-4S Wbl-type domain; that stretch reads ACRDKDPELF…GGLSEDERRA (63 aa). The [4Fe-4S] cluster site is built by C13, C41, C44, and C50.

It belongs to the WhiB family. Requires [4Fe-4S] cluster as cofactor. The Fe-S cluster can be nitrosylated by nitric oxide (NO). Post-translationally, upon Fe-S cluster removal intramolecular disulfide bonds are formed.

It localises to the cytoplasm. Acts as a transcriptional regulator. Probably redox-responsive. The apo- but not holo-form probably binds DNA. This chain is Transcriptional regulator WhiB1 (whiB1), found in Bifidobacterium longum (strain NCC 2705).